Reading from the N-terminus, the 164-residue chain is Nucleotide-binding protein Daro_3028 (164 aa).

The protein belongs to the YajQ family.

Nucleotide-binding protein. In Dechloromonas aromatica (strain RCB), this protein is Nucleotide-binding protein Daro_3028.